We begin with the raw amino-acid sequence, 499 residues long: Maturase K (499 aa).

This sequence belongs to the intron maturase 2 family. MatK subfamily.

It localises to the plastid. It is found in the chloroplast. Usually encoded in the trnK tRNA gene intron. Probably assists in splicing its own and other chloroplast group II introns. The polypeptide is Maturase K (Camellia sasanqua (Christmas camellia)).